Reading from the N-terminus, the 642-residue chain is MPCGEDWLSHPLGIVQGFFAQNGVNPDWEKKVIEYFKEKLKENNAPKWVPSLNEVPLHYLKPNSFVKFRCMVQDMFDPEFYMGVYETVNRNTKARVLHFGKYRDVAECGPQQEVDLNSPRTTTLERQTFYCVPVPGESMWVKEAYVNANQARVSPSTSYTPSRHKRSYEDDEDMDLQPNKQKDQHMGARQAGNVGGLQWCGEPKRLETEASSGQQLSSLNLSSPFDLNFPLPGEKGPACLVKVYEDWDCFKVNDVLELYGILSVDPVLSILNNDERDASSLLDPMECTDMAEEQRVHSPPASLVPRIHVVLAQKLQHINPLLPACLNKEESKTCKFVSGFMSELSPVRAELLGFLTHALLGDSLAAEYLILHLISTVYTRRDVLPLGKFTVNLSGCPRNSTFTEHLYRIIQHLVPASFRLQMTIENMNHLKFIPHKDYTANRLVSGLLQLPSNTSLVIDETLLEQGQLDTPGVHNVTALSNLITWQKVDYDFSYHQMEFPCNINVFITSEGRSLLPADCQIHLQPQLMPPNMEEYMNSLLSAVLPSVLNKFRIYLTLLRFLDYSISDEITKAVEDDFVEMRKNDPQSITADDLHQLLIVARFLSLSAGQTTLSRERWLRAKQLESLRRARLQQQKCVNGNEL.

Residues 151-161 (ARVSPSTSYTP) show a composition bias toward polar residues. Positions 151-188 (ARVSPSTSYTPSRHKRSYEDDEDMDLQPNKQKDQHMGA) are disordered. The residue at position 154 (S154) is a Phosphoserine. Position 160 is a phosphothreonine (T160). A phosphoserine mark is found at S167 and S298.

Belongs to the MCMBP family. Interacts with the MCM complex: associates with the MCM3-7 complex which lacks MCM2, while it does not interact with the MCM complex when MCM2 is present (MCM2-7 complex). Interacts with the RPA complex, when composed of all RPA1, RPA2 and RPA3 components, but not with RPA1 or RPA2 alone.

It is found in the nucleus. Its function is as follows. Associated component of the MCM complex that acts as a regulator of DNA replication. Binds to the MCM complex during late S phase and promotes the disassembly of the MCM complex from chromatin, thereby acting as a key regulator of pre-replication complex (pre-RC) unloading from replicated DNA. Can dissociate the MCM complex without addition of ATP; probably acts by destabilizing interactions of each individual subunits of the MCM complex. Required for sister chromatid cohesion. This chain is Mini-chromosome maintenance complex-binding protein (MCMBP), found in Bos taurus (Bovine).